Here is a 255-residue protein sequence, read N- to C-terminus: Uracil-DNA glycosylase (255 aa).

The disordered stretch occupies residues methionine 1–proline 20. Aspartate 99 functions as the Proton acceptor in the catalytic mechanism.

Belongs to the uracil-DNA glycosylase (UDG) superfamily. UNG family.

The protein resides in the host nucleus. It catalyses the reaction Hydrolyzes single-stranded DNA or mismatched double-stranded DNA and polynucleotides, releasing free uracil.. In terms of biological role, excises uracil residues from the DNA which can arise as a result of misincorporation of dUMP residues by DNA polymerase or deamination of cytosines. Therefore may reduce deleterious uracil incorporation into the viral genome, particularly in terminally differentiated cells which lack DNA repair enzymes. This Human herpesvirus 2 (strain HG52) (HHV-2) protein is Uracil-DNA glycosylase.